The primary structure comprises 147 residues: D-aminoacyl-tRNA deacylase (147 aa).

Positions 139–140 (GP) match the Gly-cisPro motif, important for rejection of L-amino acids motif.

The protein belongs to the DTD family. Homodimer.

It localises to the cytoplasm. The enzyme catalyses glycyl-tRNA(Ala) + H2O = tRNA(Ala) + glycine + H(+). The catalysed reaction is a D-aminoacyl-tRNA + H2O = a tRNA + a D-alpha-amino acid + H(+). Its function is as follows. An aminoacyl-tRNA editing enzyme that deacylates mischarged D-aminoacyl-tRNAs. Also deacylates mischarged glycyl-tRNA(Ala), protecting cells against glycine mischarging by AlaRS. Acts via tRNA-based rather than protein-based catalysis; rejects L-amino acids rather than detecting D-amino acids in the active site. By recycling D-aminoacyl-tRNA to D-amino acids and free tRNA molecules, this enzyme counteracts the toxicity associated with the formation of D-aminoacyl-tRNA entities in vivo and helps enforce protein L-homochirality. This Rippkaea orientalis (strain PCC 8801 / RF-1) (Cyanothece sp. (strain PCC 8801)) protein is D-aminoacyl-tRNA deacylase.